Reading from the N-terminus, the 510-residue chain is Cytochrome P450 90D2 (510 aa).

A helical transmembrane segment spans residues 6–26 (MVGSGGVYSWPAALLVAAIVV). Cys444 is a heme binding site.

Belongs to the cytochrome P450 family. It depends on heme as a cofactor.

The protein resides in the membrane. It carries out the reaction 3-epi-6-deoxocathasterone + reduced [NADPH--hemoprotein reductase] + O2 = 6-deoxotyphasterol + oxidized [NADPH--hemoprotein reductase] + H2O + H(+). The catalysed reaction is (22S,24R)-22-hydroxy-5alpha-ergostan-3-one + reduced [NADPH--hemoprotein reductase] + O2 = 3-dehydro-6-deoxoteasterone + oxidized [NADPH--hemoprotein reductase] + H2O + H(+). The enzyme catalyses 6-deoxycathasterone + reduced [NADPH--hemoprotein reductase] + O2 = 6-deoxoteasterone + oxidized [NADPH--hemoprotein reductase] + H2O + H(+). The protein operates within plant hormone biosynthesis; brassinosteroid biosynthesis. Functionally, involved in reduction steps of the biosynthesis of plant campesterol-derivative steroids, ending to castasterone (CS) but missing brassinolide (BL). Catalyzes the conversion of (22S,24R)-22-hydroxy-5alpha-ergostan-3-one (22-hydroxy-campesta-3-one, 22-OH-3-one) to 3-dehydro-6-deoxoteasterone (6-deoxo3DT, 6-deoxo-3-DHT), 3-epi-6-deoxocathasterone (3-epi-6-deoxoCT) to 6-deoxotyphasterol (6-deoxoTY) and of 6-deoxocathasterone (6-deoxoCT) to 6-deoxoteasterone (6-deoxoTE). This Brachypodium distachyon (Purple false brome) protein is Cytochrome P450 90D2.